The chain runs to 367 residues: Dihydroorotate dehydrogenase (quinone) (367 aa).

Residues 67-71 (AGFDK) and T91 contribute to the FMN site. K71 serves as a coordination point for substrate. 116–120 (NRLGF) provides a ligand contact to substrate. 2 residues coordinate FMN: N145 and N178. N178 provides a ligand contact to substrate. S181 acts as the Nucleophile in catalysis. Substrate is bound at residue N183. Residues K219 and T247 each contribute to the FMN site. 248-249 (NT) lines the substrate pocket. FMN is bound by residues G269, G298, and 319–320 (YT).

This sequence belongs to the dihydroorotate dehydrogenase family. Type 2 subfamily. As to quaternary structure, monomer. It depends on FMN as a cofactor.

The protein resides in the cell membrane. It carries out the reaction (S)-dihydroorotate + a quinone = orotate + a quinol. Its pathway is pyrimidine metabolism; UMP biosynthesis via de novo pathway; orotate from (S)-dihydroorotate (quinone route): step 1/1. Its function is as follows. Catalyzes the conversion of dihydroorotate to orotate with quinone as electron acceptor. In Roseiflexus castenholzii (strain DSM 13941 / HLO8), this protein is Dihydroorotate dehydrogenase (quinone).